Reading from the N-terminus, the 276-residue chain is NADH-cytochrome b5 reductase 2 (276 aa).

The FAD-binding FR-type domain occupies 15-127 (EAKYPLPLIE…RGPTGRLFYN (113 aa)). Lysine 17 carries the post-translational modification N6-acetyllysine. Position 18 is a phosphotyrosine (tyrosine 18). Residues 107-137 (ENMK…IKTD) and 146-181 (LVHH…RMSL) contribute to the FAD site.

It belongs to the flavoprotein pyridine nucleotide cytochrome reductase family. FAD serves as cofactor.

It catalyses the reaction 2 Fe(III)-[cytochrome b5] + NADH = 2 Fe(II)-[cytochrome b5] + NAD(+) + H(+). NADH-cytochrome b5 reductases are involved in desaturation and elongation of fatty acids, cholesterol biosynthesis, drug metabolism, and, in erythrocyte, methemoglobin reduction. Responsible for NADH-dependent lucigenin chemiluminescence in spermatozoa by reducing both lucigenin and 2-[4-iodophenyl]-3-[4-nitrophenyl]-5-[2,4-disulfophenyl]-2H tetrazolium monosodium salt (WST-1). This Rattus norvegicus (Rat) protein is NADH-cytochrome b5 reductase 2 (Cyb5r2).